The following is a 459-amino-acid chain: Zinc finger transcription factor lin-29 (459 aa).

Positions 1 to 14 are enriched in polar residues; it reads MDQTVLDSAFNSPV. Residues 1–73 form a disordered region; that stretch reads MDQTVLDSAF…GSTGSTPAHH (73 aa). A compositionally biased stretch (low complexity) spans 16–56; it reads SGIAGTTTGSGSTTHFGVGTNFKVSVRSSSRSTDGTDSTDG. Residues 57–73 are compositionally biased toward polar residues; sequence ANSDNVTGSTGSTPAHH. 5 consecutive C2H2-type zinc fingers follow at residues 151 to 173, 180 to 202, 208 to 232, 238 to 260, and 269 to 291; these read YKCTQCVKAFANSSYLSQHMRIH, GPCNYCGKKFTQLSHLQQHIRTH, YKCKFTGCDKAFSQLSNLQSHSRCH, FKCNSCYKCFTDEQSLLDHIPKH, and HICPFCGKSYTQQTYLQKHMTKH. Residues 390–406 form an interacts with mab-10 region; it reads PGFNMITPLENIQRYNG. Positions 423–444 are enriched in low complexity; the sequence is VSSTPSSTSSSSAGSSSSQGGV. The interval 423–459 is disordered; sequence VSSTPSSTSSSSAGSSSSQGGVFNPQSLINNMKNHSY. A compositionally biased stretch (polar residues) spans 446–459; it reads NPQSLINNMKNHSY.

In terms of assembly, interacts (via C-terminus) with transcription cofactor mab-10. Expressed in lateral hypodermal seam cells (at protein level).

Its subcellular location is the nucleus. Functionally, transcription factor which regulates the expression of various genes, including those involved in cuticle synthesis and maintenance, such as collagens, and in lipid metabolism. Binds to promoter regions of genes, at 5'-[(T/G)TTTTTT(A/T/C/G)]-3' consensus sequences. Heterochronic protein which controls the choice of stage specific cell fates, including at the juvenile to adult transition. Promotes differentiation, together with transcriptional cofactor mab-10, perhaps as part of a transcriptional complex. Required for vulval morphogenesis and egg laying; perhaps by acting in a subset of the lateral seam cells. Involved in the exit of seam cells from the cell cycle. Required for specification of uterine pi-cell fate, acting upstream of lin-12 Notch signaling, perhaps via maintenance of lag-2 expression in the anchor cell (AC). Involved in morphogenesis of the specialized male tail used in mating. Acts cell non-autonomously from the hypodermis to regulate expression of genes in the intestine, including genes involved in lipid metabolism. May regulate vitellogenesis via the mTORC2 signaling mediated pathway, independently of daf-16. May promote nuclear accumulation of mab-10 in seam cells post-transcriptionally. Dispensable for seam cell fusion. In terms of biological role, required for seam cell fusion. This chain is Zinc finger transcription factor lin-29, found in Caenorhabditis elegans.